Consider the following 109-residue polypeptide: Large ribosomal subunit protein uL22 (109 aa).

This sequence belongs to the universal ribosomal protein uL22 family. In terms of assembly, part of the 50S ribosomal subunit.

Its function is as follows. This protein binds specifically to 23S rRNA; its binding is stimulated by other ribosomal proteins, e.g. L4, L17, and L20. It is important during the early stages of 50S assembly. It makes multiple contacts with different domains of the 23S rRNA in the assembled 50S subunit and ribosome. The globular domain of the protein is located near the polypeptide exit tunnel on the outside of the subunit, while an extended beta-hairpin is found that lines the wall of the exit tunnel in the center of the 70S ribosome. The chain is Large ribosomal subunit protein uL22 from Ralstonia nicotianae (strain ATCC BAA-1114 / GMI1000) (Ralstonia solanacearum).